The chain runs to 672 residues: DNA ligase (672 aa).

NAD(+) is bound by residues D32–D36, S81–L82, and E113. The N6-AMP-lysine intermediate role is filled by K115. NAD(+)-binding residues include R136, E173, K290, and K314. C408, C411, C426, and C432 together coordinate Zn(2+). The 81-residue stretch at E592–S672 folds into the BRCT domain.

This sequence belongs to the NAD-dependent DNA ligase family. LigA subfamily. The cofactor is Mg(2+). It depends on Mn(2+) as a cofactor.

It carries out the reaction NAD(+) + (deoxyribonucleotide)n-3'-hydroxyl + 5'-phospho-(deoxyribonucleotide)m = (deoxyribonucleotide)n+m + AMP + beta-nicotinamide D-nucleotide.. Its function is as follows. DNA ligase that catalyzes the formation of phosphodiester linkages between 5'-phosphoryl and 3'-hydroxyl groups in double-stranded DNA using NAD as a coenzyme and as the energy source for the reaction. It is essential for DNA replication and repair of damaged DNA. The protein is DNA ligase of Yersinia enterocolitica serotype O:8 / biotype 1B (strain NCTC 13174 / 8081).